A 294-amino-acid polypeptide reads, in one-letter code: Acetyl-coenzyme A carboxylase carboxyl transferase subunit beta (294 aa).

Positions 30 to 294 (IMTKCPECKK…PGVGGEVDGE (265 aa)) constitute a CoA carboxyltransferase N-terminal domain. Residues Cys34, Cys37, Cys53, and Cys56 each coordinate Zn(2+). Residues 34 to 56 (CPECKKIMYTKELQKNLMVCNYC) form a C4-type zinc finger.

It belongs to the AccD/PCCB family. In terms of assembly, acetyl-CoA carboxylase is a heterohexamer composed of biotin carboxyl carrier protein (AccB), biotin carboxylase (AccC) and two subunits each of ACCase subunit alpha (AccA) and ACCase subunit beta (AccD). Requires Zn(2+) as cofactor.

It localises to the cytoplasm. It catalyses the reaction N(6)-carboxybiotinyl-L-lysyl-[protein] + acetyl-CoA = N(6)-biotinyl-L-lysyl-[protein] + malonyl-CoA. It functions in the pathway lipid metabolism; malonyl-CoA biosynthesis; malonyl-CoA from acetyl-CoA: step 1/1. In terms of biological role, component of the acetyl coenzyme A carboxylase (ACC) complex. Biotin carboxylase (BC) catalyzes the carboxylation of biotin on its carrier protein (BCCP) and then the CO(2) group is transferred by the transcarboxylase to acetyl-CoA to form malonyl-CoA. The chain is Acetyl-coenzyme A carboxylase carboxyl transferase subunit beta from Listeria monocytogenes serovar 1/2a (strain ATCC BAA-679 / EGD-e).